The primary structure comprises 249 residues: Diaminopimelate epimerase (249 aa).

Substrate is bound by residues Asn11 and Asn60. Cys69 functions as the Proton donor in the catalytic mechanism. Substrate is bound by residues Gly70–Asn71, Asn164, and Glu182–Arg183. Cys192 acts as the Proton acceptor in catalysis. Residue Gly193–Thr194 participates in substrate binding.

This sequence belongs to the diaminopimelate epimerase family. As to quaternary structure, homodimer.

It localises to the cytoplasm. The catalysed reaction is (2S,6S)-2,6-diaminopimelate = meso-2,6-diaminopimelate. Its pathway is amino-acid biosynthesis; L-lysine biosynthesis via DAP pathway; DL-2,6-diaminopimelate from LL-2,6-diaminopimelate: step 1/1. Functionally, catalyzes the stereoinversion of LL-2,6-diaminopimelate (L,L-DAP) to meso-diaminopimelate (meso-DAP), a precursor of L-lysine and an essential component of the bacterial peptidoglycan. This is Diaminopimelate epimerase from Campylobacter jejuni subsp. jejuni serotype O:23/36 (strain 81-176).